The chain runs to 276 residues: NH(3)-dependent NAD(+) synthetase (276 aa).

ATP is bound at residue 47 to 54; the sequence is GISGGQDS. Residue D53 coordinates Mg(2+). R141 is a binding site for deamido-NAD(+). T161 provides a ligand contact to ATP. E166 provides a ligand contact to Mg(2+). Deamido-NAD(+) contacts are provided by K174 and D181. The ATP site is built by K190 and T212. 261 to 262 lines the deamido-NAD(+) pocket; sequence HK.

Belongs to the NAD synthetase family. Homodimer.

The enzyme catalyses deamido-NAD(+) + NH4(+) + ATP = AMP + diphosphate + NAD(+) + H(+). The protein operates within cofactor biosynthesis; NAD(+) biosynthesis; NAD(+) from deamido-NAD(+) (ammonia route): step 1/1. Functionally, catalyzes the ATP-dependent amidation of deamido-NAD to form NAD. Uses ammonia as a nitrogen source. The protein is NH(3)-dependent NAD(+) synthetase of Levilactobacillus brevis (strain ATCC 367 / BCRC 12310 / CIP 105137 / JCM 1170 / LMG 11437 / NCIMB 947 / NCTC 947) (Lactobacillus brevis).